Reading from the N-terminus, the 292-residue chain is MTSGSGPRSDAMHREKNFPVASWIIHPRHRALILAFYRFVRMADDIADHATLAPDEKLLYLDLLEAELLGKGETRAEAVHLRTALDRRGMPPRHALDLLTAFRMDVTKQRYENWDEVIDYCRYSAMPVGRFVLDVHGESAATWPASDVLCAGLQVCNHLQDCGKDFLNLNRVYIPRDALSASGASIEELGAAKSSLQMLQCLRSLAAKAEVLLNGGGALVSQVKDFRLRFEVSVILSFADKIVSMLKMRDPLRERVHLSPLELLLHGVGAMANEAARRAFGRGTRFKTTVDV.

This sequence belongs to the phytoene/squalene synthase family. HpnC subfamily.

It catalyses the reaction presqualene diphosphate + H2O = hydroxysqualene + diphosphate. The protein operates within secondary metabolite biosynthesis; hopanoid biosynthesis. Its function is as follows. Involved in the biosynthesis of the hopanoid precursor squalene (SQ) from farnesyl diphosphate (FPP). Catalyzes the second step, the conversion of presqualene diphosphate (PSPP) to hydroxysqualene (HSQ). In Sinorhizobium fredii (strain NBRC 101917 / NGR234), this protein is Hydroxysqualene synthase.